Here is a 123-residue protein sequence, read N- to C-terminus: Small ribosomal subunit protein uS12 (123 aa).

3-methylthioaspartic acid is present on aspartate 89. Positions 100–123 are disordered; it reads GSLDTSGVKGRNQGRSKYGTKRPK. A compositionally biased stretch (basic residues) spans 111–123; it reads NQGRSKYGTKRPK.

Belongs to the universal ribosomal protein uS12 family. As to quaternary structure, part of the 30S ribosomal subunit. Contacts proteins S8 and S17. May interact with IF1 in the 30S initiation complex.

Functionally, with S4 and S5 plays an important role in translational accuracy. In terms of biological role, interacts with and stabilizes bases of the 16S rRNA that are involved in tRNA selection in the A site and with the mRNA backbone. Located at the interface of the 30S and 50S subunits, it traverses the body of the 30S subunit contacting proteins on the other side and probably holding the rRNA structure together. The combined cluster of proteins S8, S12 and S17 appears to hold together the shoulder and platform of the 30S subunit. The chain is Small ribosomal subunit protein uS12 from Pseudomonas fluorescens (strain ATCC BAA-477 / NRRL B-23932 / Pf-5).